Reading from the N-terminus, the 229-residue chain is 2-C-methyl-D-erythritol 4-phosphate cytidylyltransferase (229 aa).

This sequence belongs to the IspD/TarI cytidylyltransferase family. IspD subfamily.

It catalyses the reaction 2-C-methyl-D-erythritol 4-phosphate + CTP + H(+) = 4-CDP-2-C-methyl-D-erythritol + diphosphate. It participates in isoprenoid biosynthesis; isopentenyl diphosphate biosynthesis via DXP pathway; isopentenyl diphosphate from 1-deoxy-D-xylulose 5-phosphate: step 2/6. In terms of biological role, catalyzes the formation of 4-diphosphocytidyl-2-C-methyl-D-erythritol from CTP and 2-C-methyl-D-erythritol 4-phosphate (MEP). This chain is 2-C-methyl-D-erythritol 4-phosphate cytidylyltransferase, found in Shouchella clausii (strain KSM-K16) (Alkalihalobacillus clausii).